The chain runs to 427 residues: MTPQQLTEEYIFAHDLREASAKIYRAATKALLKHFGPTATVQDVDHRAVLGWRRKVLEQGLSKRSWNTYSNHLRTIWGYAIEHELVTHSQVNPFRKTTVIPPRRASKTVAAEAILRARSWLSMQVGAERCTGDRARITPAWFWLCTFEVFYYTGIRLNALLCIRKRDIDWDNQLILIRGETEKTHKEFVVPITEGLVPHLSRLLQEAEKAGFADDDQLFNVNRFSPHYKSKTMNSDQVEAMYRKLTEKVGVRMTPHRFRHTLATDLMKAPERNIHLTKCLLNHSNIQTTMSYIEADYDHMRAVLHARSLAQGALENVRKVDYSGSPQASAKPKPCGQPLARVGEVPPPEARTEPSEPREHTQETGIQRGPTSWEAEAVPQPPDTFEQSVLFTLMAQHLSNRAATASAVPAATSGSGGRGSAARDSLA.

The region spanning 1–81 (MTPQQLTEEY…HLRTIWGYAI (81 aa)) is the Core-binding (CB) domain. Residues 116-305 (RARSWLSMQV…DYDHMRAVLH (190 aa)) form the Tyr recombinase domain. Residues R156, K183, H256, R259, and H283 contribute to the active site. Y292 acts as the O-(3'-phospho-DNA)-tyrosine intermediate in catalysis. Disordered stretches follow at residues 323 to 384 (SGSP…PPDT) and 401 to 427 (RAATASAVPAATSGSGGRGSAARDSLA). Residues 350–362 (ARTEPSEPREHTQ) are compositionally biased toward basic and acidic residues. Residues 402 to 413 (AATASAVPAATS) show a composition bias toward low complexity.

The protein belongs to the 'phage' integrase family.

The protein localises to the cytoplasm. In terms of biological role, site-specific tyrosine recombinase, which acts by catalyzing the cutting and rejoining of the recombining DNA molecules. The sequence is that of Putative tyrosine recombinase XerC from Pseudomonas aeruginosa.